A 1469-amino-acid chain; its full sequence is uncharacterized protein (1469 aa).

A compositionally biased stretch (basic and acidic residues) spans Gly-146–Glu-180. Disordered regions lie at residues Gly-146–Gln-186, Ile-231–Asn-255, Thr-306–Ser-344, Leu-430–Tyr-455, Pro-520–Ser-560, Thr-654–Arg-706, Arg-719–Gln-755, Tyr-881–Asn-958, and Asn-1329–Asn-1369. Low complexity-rich tracts occupy residues Gln-232–Asn-241, Thr-306–Thr-327, Leu-430–Asn-449, Asn-523–Asn-559, and Thr-654–Pro-693. Residues Arg-719 to Lys-731 are compositionally biased toward polar residues. The span at Ser-732 to Pro-749 shows a compositional bias: pro residues. 2 stretches are compositionally biased toward low complexity: residues Asn-1329–Glu-1347 and Arg-1354–Asn-1369.

This is an uncharacterized protein from Dictyostelium discoideum (Social amoeba).